Here is a 3066-residue protein sequence, read N- to C-terminus: Genome polyprotein (3066 aa).

Residues T168–Y308 enclose the Peptidase S30 domain. Active-site for P1 proteinase activity residues include H221, E230, and S262. The Involved in interaction with stylet and aphid transmission motif lies at K361 to C364. The Involved in virions binding and aphid transmission signature appears at P617–K619. A Peptidase C6 domain is found at M643–G765. Active-site for helper component proteinase activity residues include C651 and H724. The region spanning L1236–E1388 is the Helicase ATP-binding domain. ATP is bound at residue G1249–S1256. The DECH box signature appears at D1338–H1341. Residues D1407–S1566 form the Helicase C-terminal domain. The short motif at K1891–R1900 is the Nuclear localization signal element. Y1915 carries the post-translational modification O-(5'-phospho-RNA)-tyrosine. Residues S2042–E2260 form the Peptidase C4 domain. Catalysis depends on for nuclear inclusion protein A activity residues H2087, D2122, and C2192. The RdRp catalytic domain occupies W2526 to Y2650. The interval S2799–G2836 is disordered. Over residues G2803–K2818 the composition is skewed to basic and acidic residues. A compositionally biased stretch (low complexity) spans S2819–K2831. A Phosphothreonine modification is found at T3048.

This sequence belongs to the potyviridae genome polyprotein family. In terms of assembly, interacts with host eIF4E protein (via cap-binding region); this interaction mediates the translation of the VPg-viral RNA conjugates. Part of a complex that comprises VPg, RNA, host EIF4E and EIF4G; this interaction mediates the translation of the VPg-viral RNA conjugates. As to quaternary structure, interacts with host eIF4E proteins in the host cytoplasm. VPg is uridylylated by the polymerase and is covalently attached to the 5'-end of the genomic RNA. This uridylylated form acts as a nucleotide-peptide primer for the polymerase. Post-translationally, potyviral RNA is expressed as two polyproteins which undergo post-translational proteolytic processing. Genome polyprotein is processed by NIa-pro, P1 and HC-pro proteinases resulting in the production of at least ten individual proteins. P3N-PIPO polyprotein is cleaved by P1 and HC-pro proteinases resulting in the production of three individual proteins. The P1 proteinase and the HC-pro cleave only their respective C-termini autocatalytically. 6K1 is essential for proper proteolytic separation of P3 from CI.

Its subcellular location is the host cytoplasmic vesicle. It is found in the host cytoplasm. It localises to the host nucleus. The protein resides in the virion. It catalyses the reaction RNA(n) + a ribonucleoside 5'-triphosphate = RNA(n+1) + diphosphate. The enzyme catalyses Hydrolyzes glutaminyl bonds, and activity is further restricted by preferences for the amino acids in P6 - P1' that vary with the species of potyvirus, e.g. Glu-Xaa-Xaa-Tyr-Xaa-Gln-|-(Ser or Gly) for the enzyme from tobacco etch virus. The natural substrate is the viral polyprotein, but other proteins and oligopeptides containing the appropriate consensus sequence are also cleaved.. It carries out the reaction Hydrolyzes a Gly-|-Gly bond at its own C-terminus, commonly in the sequence -Tyr-Xaa-Val-Gly-|-Gly, in the processing of the potyviral polyprotein.. Functionally, required for aphid transmission and also has proteolytic activity. Only cleaves a Gly-Gly dipeptide at its own C-terminus. Interacts with virions and aphid stylets. Acts as a suppressor of RNA-mediated gene silencing, also known as post-transcriptional gene silencing (PTGS), a mechanism of plant viral defense that limits the accumulation of viral RNAs. May have RNA-binding activity. Its function is as follows. Has helicase activity. It may be involved in replication. Indispensable for virus replication. Reduces the abundance of host transcripts related to jasmonic acid biosynthesis therefore altering the host defenses. In order to increase its own stability, decreases host protein degradation pathways. In terms of biological role, indispensable for virus replication. Functionally, mediates the cap-independent, EIF4E-dependent translation of viral genomic RNAs. Binds to the cap-binding site of host EIF4E and thus interferes with the host EIF4E-dependent mRNA export and translation. VPg-RNA directly binds EIF4E and is a template for transcription. Also forms trimeric complexes with EIF4E-EIF4G, which are templates for translation. Its function is as follows. Has RNA-binding and proteolytic activities. An RNA-dependent RNA polymerase that plays an essential role in the virus replication. In terms of biological role, involved in aphid transmission, cell-to-cell and systemis movement, encapsidation of the viral RNA and in the regulation of viral RNA amplification. The chain is Genome polyprotein from Glycine max (Soybean).